A 126-amino-acid chain; its full sequence is Holo-[acyl-carrier-protein] synthase (126 aa).

Positions 8 and 56 each coordinate Mg(2+).

This sequence belongs to the P-Pant transferase superfamily. AcpS family. The cofactor is Mg(2+).

It localises to the cytoplasm. It catalyses the reaction apo-[ACP] + CoA = holo-[ACP] + adenosine 3',5'-bisphosphate + H(+). In terms of biological role, transfers the 4'-phosphopantetheine moiety from coenzyme A to a Ser of acyl-carrier-protein. The protein is Holo-[acyl-carrier-protein] synthase of Clostridium tetani (strain Massachusetts / E88).